Consider the following 102-residue polypeptide: MEKISNLLEDKPVVIFSKTSCCMSHSIKSLISGYGANSTVYELDEMSNGPEIERALVELGCKPTVPAVFIGQELVGGANQLMSLQVRNQLASLLRRAGAIWI.

One can recognise a Glutaredoxin domain in the interval 1 to 101; it reads MEKISNLLED…SLLRRAGAIW (101 aa). C21 serves as a coordination point for [2Fe-2S] cluster.

It belongs to the glutaredoxin family. CC-type subfamily.

The protein localises to the cytoplasm. Functionally, may only reduce GSH-thiol disulfides, but not protein disulfides. This Arabidopsis thaliana (Mouse-ear cress) protein is Monothiol glutaredoxin-S1 (GRXS1).